A 549-amino-acid chain; its full sequence is Myotubularin-related protein 9 (549 aa).

Residue methionine 1 is modified to N-acetylmethionine. A GRAM domain is found at alanine 4–leucine 99. The Myotubularin phosphatase domain occupies glycine 123–phenylalanine 498. A coiled-coil region spans residues leucine 508 to glutamate 542. Position 548 is a phosphoserine (serine 548).

This sequence belongs to the protein-tyrosine phosphatase family. Non-receptor class myotubularin subfamily. In terms of assembly, homodimer. Heterodimer (via C-terminus) with lipid phosphatase MTMR6 (via C-terminus). Heterodimer (via coiled coil domain) with lipid phosphatase MTMR7 (via C-terminus). Heterodimer with lipid phosphatase MTMR8.

Its subcellular location is the cytoplasm. The protein resides in the cell projection. It localises to the ruffle membrane. The protein localises to the perinuclear region. It is found in the endoplasmic reticulum. Acts as an adapter for myotubularin-related phosphatases. Increases lipid phosphatase MTMR6 catalytic activity, specifically towards phosphatidylinositol 3,5-bisphosphate, and MTMR6 binding affinity for phosphorylated phosphatidylinositols. Positively regulates lipid phosphatase MTMR7 catalytic activity. Increases MTMR8 catalytic activity towards phosphatidylinositol 3-phosphate. The formation of the MTMR6-MTMR9 complex, stabilizes both MTMR6 and MTMR9 protein levels. Stabilizes MTMR8 protein levels. Plays a role in the late stages of macropinocytosis possibly by regulating MTMR6-mediated dephosphorylation of phosphatidylinositol 3-phosphate in membrane ruffles. Negatively regulates autophagy, in part via its association with MTMR8. Negatively regulates DNA damage-induced apoptosis, in part via its association with MTMR6. Does not bind mono-, di- and tri-phosphorylated phosphatidylinositols, phosphatidic acid and phosphatidylserine. In Bos taurus (Bovine), this protein is Myotubularin-related protein 9 (MTMR9).